Here is a 247-residue protein sequence, read N- to C-terminus: Elongation factor Ts (247 aa).

The interval 82 to 85 (TDFV) is involved in Mg(2+) ion dislocation from EF-Tu.

The protein belongs to the EF-Ts family.

It is found in the cytoplasm. Associates with the EF-Tu.GDP complex and induces the exchange of GDP to GTP. It remains bound to the aminoacyl-tRNA.EF-Tu.GTP complex up to the GTP hydrolysis stage on the ribosome. The protein is Elongation factor Ts (tsf) of Arthrospira platensis (Spirulina platensis).